Reading from the N-terminus, the 96-residue chain is UPF0235 protein YggU (96 aa).

Belongs to the UPF0235 family.

In Salmonella newport (strain SL254), this protein is UPF0235 protein YggU.